Consider the following 97-residue polypeptide: Putative pterin-4-alpha-carbinolamine dehydratase (97 aa).

It belongs to the pterin-4-alpha-carbinolamine dehydratase family.

It catalyses the reaction (4aS,6R)-4a-hydroxy-L-erythro-5,6,7,8-tetrahydrobiopterin = (6R)-L-erythro-6,7-dihydrobiopterin + H2O. The protein is Putative pterin-4-alpha-carbinolamine dehydratase of Ruegeria pomeroyi (strain ATCC 700808 / DSM 15171 / DSS-3) (Silicibacter pomeroyi).